The following is a 198-amino-acid chain: NAD(P)H dehydrogenase (quinone) (198 aa).

The 186-residue stretch at 4 to 189 (VLVLYYSMYG…ALARYQGRHV (186 aa)) folds into the Flavodoxin-like domain. FMN contacts are provided by residues 10-15 (SMYGHV) and 78-80 (TRF). Tyr-12 provides a ligand contact to NAD(+). Trp-98 lines the substrate pocket. Residues 113–118 (STGTGG) and His-133 contribute to the FMN site.

It belongs to the WrbA family. Requires FMN as cofactor.

It catalyses the reaction a quinone + NADH + H(+) = a quinol + NAD(+). The enzyme catalyses a quinone + NADPH + H(+) = a quinol + NADP(+). The protein is NAD(P)H dehydrogenase (quinone) of Halorhodospira halophila (strain DSM 244 / SL1) (Ectothiorhodospira halophila (strain DSM 244 / SL1)).